The primary structure comprises 504 residues: Glycerol kinase (504 aa).

Position 13 (Thr-13) interacts with ADP. Thr-13, Thr-14, and Ser-15 together coordinate ATP. Thr-13 contributes to the sn-glycerol 3-phosphate binding site. Arg-17 contributes to the ADP binding site. 3 residues coordinate sn-glycerol 3-phosphate: Arg-83, Glu-84, and Tyr-135. Residues Arg-83, Glu-84, and Tyr-135 each coordinate glycerol. A Phosphohistidine; by HPr modification is found at His-231. A sn-glycerol 3-phosphate-binding site is contributed by Asp-245. Glycerol contacts are provided by Asp-245 and Gln-246. Residues Thr-267 and Gly-310 each contribute to the ADP site. 4 residues coordinate ATP: Thr-267, Gly-310, Gln-314, and Gly-411. Gly-411 and Asn-415 together coordinate ADP.

This sequence belongs to the FGGY kinase family. As to quaternary structure, homotetramer and homodimer (in equilibrium). In terms of processing, the phosphoenolpyruvate-dependent sugar phosphotransferase system (PTS), including enzyme I, and histidine-containing protein (HPr) are required for the phosphorylation, which leads to the activation of the enzyme.

The enzyme catalyses glycerol + ATP = sn-glycerol 3-phosphate + ADP + H(+). It functions in the pathway polyol metabolism; glycerol degradation via glycerol kinase pathway; sn-glycerol 3-phosphate from glycerol: step 1/1. With respect to regulation, activated by phosphorylation and inhibited by fructose 1,6-bisphosphate (FBP). Its function is as follows. Key enzyme in the regulation of glycerol uptake and metabolism. Catalyzes the phosphorylation of glycerol to yield sn-glycerol 3-phosphate. The protein is Glycerol kinase of Pediococcus pentosaceus (strain ATCC 25745 / CCUG 21536 / LMG 10740 / 183-1w).